We begin with the raw amino-acid sequence, 247 residues long: LHFPL tetraspan subfamily member 4 protein (247 aa).

4 helical membrane-spanning segments follow: residues Ile22–Ile42, Phe97–Phe117, Ile127–Pro147, and Ile178–Gly198.

Belongs to the LHFP family. As to quaternary structure, interacts with GABA(A) receptor subunits. Identified in a complex of 720 kDa composed of LHFPL4, NLGN2, GABRA1, GABRB2, GABRG2 and GABRB3. Interacts with GABRB3. Interacts with GABRA2. Interacts with GABRG2. Interacts with GABRA1. Interacts with NLGN2; leading to mutual regulation of protein level and synaptic clustering.

Its subcellular location is the cell projection. It localises to the dendrite. The protein localises to the postsynaptic cell membrane. In terms of biological role, plays a role in the regulation of inhibitory synapse formation and function by being involved in maintening gamma-aminobutyric acid receptors (GABAARs) clustering and their associated scaffold proteins at inhibitory synaptic sites. Acts in concert with NLGN2 to recruit or stabilize GABAARs. In Homo sapiens (Human), this protein is LHFPL tetraspan subfamily member 4 protein.